Consider the following 483-residue polypeptide: Iron-sulfur cluster assembly SufBD family protein ycf24 (483 aa).

The protein belongs to the iron-sulfur cluster assembly SufBD family.

It is found in the plastid. The protein localises to the chloroplast. The polypeptide is Iron-sulfur cluster assembly SufBD family protein ycf24 (ycf24) (Guillardia theta (Cryptophyte)).